The chain runs to 2342 residues: MDGVSSEANEENDNIERPVRRRHSSILKPPRSPLQDLRGGNERVQESNALRNKKNSRRVSFADTIKVFQTESHMKIVRKSEMEGCSAMVPSQLQLLPPGFKRFSCLSLPETETGENLLLIQNKKLEDNYCEITGMNTLLSAPIHTQMQQKEFSIIEHTRERKHANDQTVIFSDENQMDLTSSHTVMITKGLLDNPISEKSTKIDTTSFLANLKLHTEDSRMKKEVNFSVDQNTSSENKIDFNDFIKRLKTGKCSAFPDVPDKENFEIPIYSKEPNSASSTHQMHVSLKEDENNSNITRLFREKDDGMNFTQCHTANIQTLIPTSSETNSRESKGNDITIYGNDFMDLTFNHTLQILPATGNFSEIENQTQNAMDVTTGYGTKASGNKTVFKSKQNTAFQDLSINSADKIHITRSHIMGAETHIVSQTCNQDARILAMTPESIYSNPSIQGCKTVFYSSCNDAMEMTKCLSNMREEKNLLKHDSNYAKMYCNPDAMSSLTEKTIYSGEENMDITKSHTVAIDNQIFKQDQSNVQIAAAPTPEKEMMLQNLMTTSEDGKMNVNCNSVPHVSKERIQQSLSNPLSISLTDRKTELLSGENMDLTESHTSNLGSQVPLAAYNLAPESTSESHSQSKSSSDECEEITKSRNEPFQRSDIIAKNSLTDTWNKDKDWVLKILPYLDKDSPQSADCNQEIATSHNIVYCGGVLDKQITNRNTVSWEQSLFSTTKPLFSSGQFSMKNHDTAISSHTVKSVLGQNSKLAEPLRKSLSNPTPDYCHDKMIICSEEEQNMDLTKSHTVVIGFGPSELQELGKTNLEHTTGQLTTMNRQIAVKVEKCGKSPIEKSGVLKSNCIMDVLEDESVQKPKFPKEKQNVKIWGRKSVGGPKIDKTIVFSEDDKNDMDITKSYTIEINHRPLLEKRDCHLVPLAGTSETILYTCRQDDMEITRSHTTALECKTVSPDEITTRPMDKTVVFVDNHVELEMTESHTVFIDYQEKERTDRPNFELSQRKSLGTPTVICTPTEESVFFPGNGESDRLVANDSQLTPLEEWSNNRGPVEVADNMELSKSATCKNIKDVQSPGFLNEPLSSKSQRRKSLKLKNDKTIVFSENHKNDMDITQSCMVEIDNESALEDKEDFHLAGASKTILYSCGQDDMEITRSHTTALECKTLLPNEIAIRPMDKTVLFTDNYSDLEVTDSHTVFIDCQATEKILEENPKFGIGKGKNLGVSFPKDNSCVQEIAEKQALAVGNKIVLHTEQKQQLFAATNRTTNEIIKFHSAAMDEKVIGKVVDQACTLEKAQVESCQLNNRDRRNVDFTSSHATAVCGSSDNYSCLPNVISCTDNLEGSAMLLCDKDEEKANYCPVQNDLAYANDFASEYYLESEGQPLSAPCPLLEKEEVIQTSTKGQLDCVITLHKDQDLIKDPRNLLANQTLVYSQDLGEMTKLNSKRVSFKLPKDQMKVYVDDIYVIPQPHFSTDQPPLPKKGQSSINKEEVILSKAGNKSLNIIENSSAPICENKPKILNSEEWFAAACKKELKENIQTTNYNTALDFHSNSDVTKQVIQTHVNAGEAPDPVITSNVPCFHSIKPNLNNLNGKTGEFLAFQTVHLPPLPEQLLELGNKAHNDMHIVQATEIHNINIISSNAKDSRDEENKKSHNGAETTSLPPKTVFKDKVRRCSLGIFLPRLPNKRNCSVTGIDDLEQIPADTTDINHLETQPVSSKDSGIGSVAGKLNLSPSQYINEENLPVYPDEINSSDSINIETEEKALIETYQKEISPYENKMGKTCNSQKRTWVQEEEDIHKEKKIRKNEIKFSDTTQDREIFDHHTEEDIDKSANSVLIKNLSRTPSSCSSSLDSIKADGTSLDFSTYRSSQMESQFLRDTICEESLREKLQDGRITIREFFILLQVHILIQKPRQSNLPGNFTVNTPPTPEDLMLSQYVYRPKIQIYREDCEARRQKIEELKLSASNQDKLLVDINKNLWEKMRHCSDKELKAFGIYLNKIKSCFTKMTKVFTHQGKVALYGKLVQSAQNEREKLQIKIDEMDKILKKIDNCLTEMETETKNLEDEEKNNPVEEWDSEMRAAEKELEQLKTEEEELQRNLLELEVQKEQTLAQIDFMQKQRNRTEELLDQLSLSEWDVVEWSDDQAVFTFVYDTIQLTITFEESVVGFPFLDKRYRKIVDVNFQSLLDEDQAPPSSLLVHKLIFQYVEEKESWKKTCTTQHQLPKMLEEFSLVVHHCRLLGEEIEYLKRWGPNYNLMNIDINNNELRLLFSSSAAFAKFEITLFLSAYYPSVPLPSTIQNHVGNTSQDDIATILSKVPLENNYLKNVVKQIYQDLFQDCHFYH.

Residues 1–56 are disordered; the sequence is MDGVSSEANEENDNIERPVRRRHSSILKPPRSPLQDLRGGNERVQESNALRNKKNS. Positions 1–250 are may mediate oligomerization; it reads MDGVSSEANE…FNDFIKRLKT (250 aa). Positions 1–728 are interaction with BUB1 and BUB1B; that stretch reads MDGVSSEANE…QSLFSTTKPL (728 aa). Interaction with microtubules stretches follow at residues 17–34 and 53–80; these read RPVR…RSPL and KKNS…VRKS. The interaction with PP1CA; contains the protein phosphatase 1 (PP1) interaction motifs SILK, RVXF and phi-phi stretch occupies residues 23–80; the sequence is HSSILKPPRSPLQDLRGGNERVQESNALRNKKNSRRVSFADTIKVFQTESHMKIVRKS. At Ser24 the chain carries Phosphoserine; by AURKB. Phosphoserine is present on Ser32. Phosphoserine; by AURKB is present on Ser60. The segment at 174–190 is interaction with BUB1; that stretch reads ENQMDLTSSHTVMITKG. The segment at 210-226 is interaction with BUB1B; the sequence is ANLKLHTEDSRMKKEVN. Thr539 is modified (phosphothreonine). A phosphoserine mark is found at Ser578 and Ser584. The residue at position 586 (Thr586) is a Phosphothreonine. Residues 620–646 are disordered; it reads APESTSESHSQSKSSSDECEEITKSRN. Residues 622-633 show a composition bias toward low complexity; that stretch reads ESTSESHSQSKS. Ser767 bears the Phosphoserine mark. Residues 855–1201 form a 2 X 104 AA approximate repeats region; that stretch reads EDESVQKPKF…VTDSHTVFID (347 aa). The stretch at 885 to 989 is repeat 1; the sequence is DKTIVFSEDD…MTESHTVFID (105 aa). Thr901 carries the post-translational modification Phosphothreonine. Phosphoserine is present on residues Ser956, Ser1039, Ser1076, and Ser1088. Repeat unit 2 spans residues 1099–1201; it reads DKTIVFSENH…VTDSHTVFID (103 aa). Ser1448 is modified (phosphoserine). The interval 1639–1662 is disordered; sequence SNAKDSRDEENKKSHNGAETTSLP. Positions 1642-1651 are enriched in basic and acidic residues; that stretch reads KDSRDEENKK. A phosphoserine mark is found at Ser1675 and Ser1773. Residues 1789 to 1803 carry the Nuclear localization signal motif; that stretch reads TWVQEEEDIHKEKKI. Ser1831 bears the Phosphoserine mark. Residues Ser1831 and Ser1834 each carry the phosphoserine; by TTK modification. 2 positions are modified to phosphoserine: Ser1845 and Ser1860. Residues 1981–2108 are required for interaction with ZWINT; that stretch reads KMRHCSDKEL…LLELEVQKEQ (128 aa). A coiled-coil region spans residues 2024 to 2133; it reads VQSAQNEREK…EELLDQLSLS (110 aa). Residues 2091-2311 form an interaction with NSL1, DSN1 and required for assembly into the outer kinetochore region; the sequence is EEEELQRNLL…GNTSQDDIAT (221 aa).

As to quaternary structure, component of the KNL1 complex composed of KNL1 and ZWINT. Part of the ten-subunit outer kinetochore KMN network that includes the KNL1, MIS12 and NDC80 complexes; a bioriented kinetochore contains approximately 150 copies of the network. Interacts (via C-terminus) with the MIS12 complex subunits NSL1 (via C-terminus), PMF1 and DSN1; the interaction is direct. Interacts (via N-terminal region) with BUB1B (via BUB1 N-terminal domain); the interaction is direct and is required for cell cycle arrest upon activation of the mitotic spindle assembly checkpoint. Interacts (via N-terminal region) with BUB1 (via BUB1 N-terminal domain); the interaction is direct. Interacts with the protein phosphatase PP1 subunit PPP1CA; the interaction is direct and mutually exclusive with binding to microtubules. Interacts with the protein phosphatase PP1 subunit PPP1CC; the interaction is direct and mutually exclusive with binding to microtubules. Post-translationally, phosphorylation by AURKB negatively regulates its interaction with protein phosphatase 1 (PP1) subunit PPP1CA and with microtubules. In terms of tissue distribution, highly expressed in testis, where it is localized in germ cells, in particular in spermatocytes and in the pre-acrosome of round spermatids. Detected in the acrosome of ejaculated spermatozoa. Detected in adult thymus, bone marrow, colon, small intestine, appendix and placenta, and in fetal liver and thymus.

It is found in the nucleus. The protein localises to the chromosome. Its subcellular location is the centromere. It localises to the kinetochore. The protein resides in the cytoplasm. Functionally, acts as a component of the outer kinetochore KNL1 complex that serves as a docking point for spindle assembly checkpoint components and mediates microtubule-kinetochore interactions. Kinetochores, consisting of a centromere-associated inner segment and a microtubule-contacting outer segment, play a crucial role in chromosome segregation by mediating the physical connection between centromeric DNA and spindle microtubules. The outer kinetochore is made up of the ten-subunit KMN network, comprising the MIS12, NDC80 and KNL1 complexes, and auxiliary microtubule-associated components; together they connect the outer kinetochore with the inner kinetochore, bind microtubules, and mediate interactions with mitotic checkpoint proteins that delay anaphase until chromosomes are bioriented on the spindle. Required for kinetochore binding by a distinct subset of kMAPs (kinetochore-bound microtubule-associated proteins) and motors. Acts in coordination with CENPK to recruit the NDC80 complex to the outer kinetochore. Can bind either to microtubules or to the protein phosphatase 1 (PP1) catalytic subunits PPP1CA and PPP1CC (via overlapping binding sites), it has higher affinity for PP1. Recruits MAD2L1 to the kinetochore and also directly links BUB1 and BUB1B to the kinetochore. In addition to orienting mitotic chromosomes, it is also essential for alignment of homologous chromosomes during meiotic metaphase I. In meiosis I, required to activate the spindle assembly checkpoint at unattached kinetochores to correct erroneous kinetochore-microtubule attachments. The polypeptide is Outer kinetochore KNL1 complex subunit KNL1 (Homo sapiens (Human)).